We begin with the raw amino-acid sequence, 680 residues long: MKHLLTLALCFSSINAVAVTVPHKAVGTGIPEGSLQFLSLRASAPIGSAISRNNWAVTCDSAQSGNECNKAIDGNKDTFWHTFYGANGDPKPPHTYTIDMKTTQNVNGLSMLPRQDGNQNGWIGRHEVYLSSDGTNWGSPVASGSWFADSTTKYSNFETRPARYVRLVAITEANGQPWTSIAEINVFQASSYTAPQPGLGRWGPTIDLPIVPAAAAIEPTSGRVLMWSSYRNDAFGGSPGGITLTSSWDPSTGIVSDRTVTVTKHDMFCPGISMDGNGQIVVTGGNDAKKTSLYDSSSDSWIPGPDMQVARGYQSSATMSDGRVFTIGGSWSGGVFEKNGEVYSPSSKTWTSLPNAKVNPMLTADKQGLYRSDNHAWLFGWKKGSVFQAGPSTAMNWYYTSGSGDVKSAGKRQSNRGVAPDAMCGNAVMYDAVKGKILTFGGSPDYQDSDATTNAHIITLGEPGTSPNTVFASNGLYFARTFHTSVVLPDGSTFITGGQRRGIPFEDSTPVFTPEIYVPEQDTFYKQNPNSIVRVYHSISLLLPDGRVFNGGGGLCGDCTTNHFDAQIFTPNYLYNSNGNLATRPKITRTSTQSVKVGGRITISTDSSISKASLIRYGTATHTVNTDQRRIPLTLTNNGGNSYSFQVPSDSGVALPGYWMLFVMNSAGVPSVASTIRVTQ.

Residues 1-24 form the signal peptide; it reads MKHLLTLALCFSSINAVAVTVPHK. Residues 25–41 constitute a propeptide that is removed on maturation; sequence AVGTGIPEGSLQFLSLR. Residues 42–189 enclose the F5/8 type C domain; that stretch reads ASAPIGSAIS…SIAEINVFQA (148 aa). Cysteine 59 and cysteine 68 form a disulfide bridge. Kelch repeat units follow at residues 223 to 268, 279 to 321, 323 to 372, 436 to 490, and 492 to 544; these read RVLM…HDMF, QIVV…TMSD, RVFT…LYRS, KILT…VLPD, and STFI…LLLP. A cross-link (3'-(S-cysteinyl)-tyrosine (Cys-Tyr)) is located at residues 269 to 313; sequence CPGISMDGNGQIVVTGGNDAKKTSLYDSSSDSWIPGPDMQVARGY. Residue tyrosine 313 participates in Cu cation binding. Residues tyrosine 536 and histidine 537 each coordinate Cu cation. The active-site Proton acceptor is the tyrosine 536. A disulfide bond links cysteine 556 and cysteine 559. Histidine 622 lines the Cu cation pocket.

As to quaternary structure, monomer. Requires Cu(2+) as cofactor. Galactose oxidase contains a protein-derived free radical cofactor. In the active state, Tyr-313, which is cross-linked to Cys-269 via a thioether bond, is oxidized to a radical and acts with Cu(2+) as a two-electron acceptor in the oxidation reaction. The cross-link is believed to modulate the redox potential of the tyrosyl radical, which is further stabilized by a stacking interaction with Trp-331 in the active site. The post-translational formation of the cross-link is closely linked to the propeptide cleavage event, and both are copper-dependent, autocatalytic processes. The propeptide may act as an intramolecular chaperone, facilitating thioester bond formation and copper binding by positioning of active-site residues, including copper ligands.

The protein localises to the secreted. The enzyme catalyses D-galactose + O2 = D-galacto-hexodialdose + H2O2. Inhibited by diethyldithiocarbamate. Its function is as follows. Catalyzes the sterospecific oxidation of primary alcohols to the corresponding aldehydes. The biologically relevant substrate of the enzyme is not known as the enzyme exhibits broad substrate specificity from small alcohols through sugars to oligo- and polysaccharides. The protein is Galactose oxidase (GAOA) of Gibberella zeae (Wheat head blight fungus).